The following is a 573-amino-acid chain: Urease subunit alpha 2 (573 aa).

The region spanning 135-573 (GGMDTHVHYI…ISLNQLYFFS (439 aa)) is the Urease domain. Ni(2+)-binding residues include H140, H142, and K223. K223 is modified (N6-carboxylysine). H225 serves as a coordination point for substrate. Residues H252 and H278 each contribute to the Ni(2+) site. H326 (proton donor) is an active-site residue. D366 lines the Ni(2+) pocket.

It belongs to the metallo-dependent hydrolases superfamily. Urease alpha subunit family. As to quaternary structure, heterotrimer of UreA (gamma), UreB (beta) and UreC (alpha) subunits. Three heterotrimers associate to form the active enzyme. The cofactor is Ni cation. Post-translationally, carboxylation allows a single lysine to coordinate two nickel ions.

It is found in the cytoplasm. The catalysed reaction is urea + 2 H2O + H(+) = hydrogencarbonate + 2 NH4(+). It participates in nitrogen metabolism; urea degradation; CO(2) and NH(3) from urea (urease route): step 1/1. In terms of biological role, disrupting the ure2 operon has no effect on urease activity or pathogen survival in BALB/c mice when administered orally. The polypeptide is Urease subunit alpha 2 (Brucella abortus (strain 2308)).